A 25-amino-acid chain; its full sequence is GLLSVLGSVAQHVLPHVVPVIAEHL.

A Leucine amide modification is found at L25.

As to expression, expressed by the skin parotoid and/or rostral glands.

Its subcellular location is the secreted. Its function is as follows. Antibacterial peptide, that adopts an alpha helical conformation which can disrupt bacterial membranes. Each caerin displays a different antimicrobial specificity. In Ranoidea caerulea (Green tree frog), this protein is Caerin-1.3.